A 212-amino-acid chain; its full sequence is MSLFDKKHLVTQADALPGRNTPMPIATLHAVNEHSMTNVPAGMEIAYFAMGCFWGVERLFWQLPGVYSTAAGYAGGYTPNPTYREVCSGQTGHAEAVRIVYDPAVIRYEQLLQTFWENHDPTQGMQQGNDHGTQYRSAIYPLTPEQNAAAHASRERFQSAMAAAGDHRPITTEIAHATPFYYAEDEHQQYLHKNPYGYCGIGGIGVCLPPDA.

The active site involves cysteine 52.

The protein belongs to the MsrA Met sulfoxide reductase family.

The catalysed reaction is L-methionyl-[protein] + [thioredoxin]-disulfide + H2O = L-methionyl-(S)-S-oxide-[protein] + [thioredoxin]-dithiol. It catalyses the reaction [thioredoxin]-disulfide + L-methionine + H2O = L-methionine (S)-S-oxide + [thioredoxin]-dithiol. In terms of biological role, has an important function as a repair enzyme for proteins that have been inactivated by oxidation. Catalyzes the reversible oxidation-reduction of methionine sulfoxide in proteins to methionine. The sequence is that of Peptide methionine sulfoxide reductase MsrA from Salmonella paratyphi A (strain AKU_12601).